The following is a 103-amino-acid chain: Pyrimidine/purine nucleoside phosphorylase (103 aa).

The protein belongs to the nucleoside phosphorylase PpnP family.

It carries out the reaction a purine D-ribonucleoside + phosphate = a purine nucleobase + alpha-D-ribose 1-phosphate. The enzyme catalyses adenosine + phosphate = alpha-D-ribose 1-phosphate + adenine. The catalysed reaction is cytidine + phosphate = cytosine + alpha-D-ribose 1-phosphate. It catalyses the reaction guanosine + phosphate = alpha-D-ribose 1-phosphate + guanine. It carries out the reaction inosine + phosphate = alpha-D-ribose 1-phosphate + hypoxanthine. The enzyme catalyses thymidine + phosphate = 2-deoxy-alpha-D-ribose 1-phosphate + thymine. The catalysed reaction is uridine + phosphate = alpha-D-ribose 1-phosphate + uracil. It catalyses the reaction xanthosine + phosphate = alpha-D-ribose 1-phosphate + xanthine. Functionally, catalyzes the phosphorolysis of diverse nucleosides, yielding D-ribose 1-phosphate and the respective free bases. Can use uridine, adenosine, guanosine, cytidine, thymidine, inosine and xanthosine as substrates. Also catalyzes the reverse reactions. In Shewanella baltica (strain OS155 / ATCC BAA-1091), this protein is Pyrimidine/purine nucleoside phosphorylase.